The primary structure comprises 126 residues: Holo-[acyl-carrier-protein] synthase (126 aa).

Mg(2+)-binding residues include Asp8 and Glu57.

This sequence belongs to the P-Pant transferase superfamily. AcpS family. It depends on Mg(2+) as a cofactor.

It localises to the cytoplasm. It carries out the reaction apo-[ACP] + CoA = holo-[ACP] + adenosine 3',5'-bisphosphate + H(+). In terms of biological role, transfers the 4'-phosphopantetheine moiety from coenzyme A to a Ser of acyl-carrier-protein. The sequence is that of Holo-[acyl-carrier-protein] synthase from Halorhodospira halophila (strain DSM 244 / SL1) (Ectothiorhodospira halophila (strain DSM 244 / SL1)).